An 89-amino-acid polypeptide reads, in one-letter code: Small ribosomal subunit protein uS14 (89 aa).

The tract at residues 32-51 is disordered; it reads DYEGLQKLPKNSSPVRLHNR.

Belongs to the universal ribosomal protein uS14 family. In terms of assembly, part of the 30S ribosomal subunit. Contacts proteins S3 and S10.

Its function is as follows. Binds 16S rRNA, required for the assembly of 30S particles and may also be responsible for determining the conformation of the 16S rRNA at the A site. In Christiangramia forsetii (strain DSM 17595 / CGMCC 1.15422 / KT0803) (Gramella forsetii), this protein is Small ribosomal subunit protein uS14.